Consider the following 562-residue polypeptide: Glutamine--tRNA ligase (562 aa).

The 'HIGH' region motif lies at 35–45 (PEPNGYLHIGH). Residues 36-38 (EPN) and 42-48 (HIGHAKS) contribute to the ATP site. Positions 68 and 213 each coordinate L-glutamine. ATP contacts are provided by residues threonine 232 and 264–265 (RL). Residues 271-275 (ITSKR) carry the 'KMSKS' region motif.

This sequence belongs to the class-I aminoacyl-tRNA synthetase family. As to quaternary structure, monomer.

The protein localises to the cytoplasm. It catalyses the reaction tRNA(Gln) + L-glutamine + ATP = L-glutaminyl-tRNA(Gln) + AMP + diphosphate. This chain is Glutamine--tRNA ligase, found in Neisseria meningitidis serogroup A / serotype 4A (strain DSM 15465 / Z2491).